Here is a 518-residue protein sequence, read N- to C-terminus: Laccase (518 aa).

A signal peptide spans 1–21; sequence MSRFQSLLSFVLVSLAAVANA. Plastocyanin-like domains are found at residues 23 to 148 and 160 to 302; these read IGPV…FVVY and IDND…ILRY. Residues asparagine 72 and asparagine 75 are each glycosylated (N-linked (GlcNAc...) asparagine). Cu cation is bound by residues histidine 85, histidine 87, histidine 130, and histidine 132. Intrachain disulfides connect cysteine 106–cysteine 507 and cysteine 138–cysteine 226. The N-linked (GlcNAc...) asparagine glycan is linked to asparagine 229. Residues 308 to 330 are disordered; it reads VEPTTTQTTSTKPLNEADLHPLT. 3 N-linked (GlcNAc...) asparagine glycosylation sites follow: asparagine 354, asparagine 362, and asparagine 398. Positions 369–489 constitute a Plastocyanin-like 3 domain; that stretch reads SVPVLLQILS…AGFAVVLAED (121 aa). Positions 416, 419, 421, 471, 472, 473, and 477 each coordinate Cu cation.

Belongs to the multicopper oxidase family. Requires Cu cation as cofactor.

The protein resides in the secreted. The catalysed reaction is 4 hydroquinone + O2 = 4 benzosemiquinone + 2 H2O. In terms of biological role, lignin degradation and detoxification of lignin-derived products. Cleaves the C-C and C-O bonds of some phenolic lignin model compounds (such as O- and P-quinols, aminophenols and phenylenediamine). May also be involved in synthesis of phenoxazinone pigments. This is Laccase (LCC3-1) from Pycnoporus cinnabarinus (Cinnabar-red polypore).